Consider the following 1014-residue polypeptide: UvrABC system protein A (1014 aa).

Position 32-39 (32-39) interacts with ATP; it reads GLSGSGKS. ABC transporter domains follow at residues 314–592 and 612–941; these read WSHG…AESQ and QDPS…KFLR. An ATP-binding site is contributed by 645–652; it reads GVSGSGKS. A C4-type zinc finger spans residues 744–770; it reads CENCAGDGTIKIEMNFLPDVYVPCEVC. Residues 976 to 995 show a composition bias toward low complexity; the sequence is TKTVTGTAAKKATATRTAKT. The interval 976 to 1014 is disordered; sequence TKTVTGTAAKKATATRTAKTAVKKAAKPAAKKTTRTSKA. Basic residues predominate over residues 996-1014; that stretch reads AVKKAAKPAAKKTTRTSKA.

This sequence belongs to the ABC transporter superfamily. UvrA family. Forms a heterotetramer with UvrB during the search for lesions.

Its subcellular location is the cytoplasm. Its function is as follows. The UvrABC repair system catalyzes the recognition and processing of DNA lesions. UvrA is an ATPase and a DNA-binding protein. A damage recognition complex composed of 2 UvrA and 2 UvrB subunits scans DNA for abnormalities. When the presence of a lesion has been verified by UvrB, the UvrA molecules dissociate. The chain is UvrABC system protein A from Streptomyces coelicolor (strain ATCC BAA-471 / A3(2) / M145).